Reading from the N-terminus, the 345-residue chain is IGF-like family receptor 1 (345 aa).

The signal sequence occupies residues 1-20 (MGPSWLLWTVAVAVLLLTRA). The Extracellular portion of the chain corresponds to 21 to 163 (ASMEASSFCG…SSRPGFVSAS (143 aa)). The N-linked (GlcNAc...) asparagine glycan is linked to Asn87. Residues 106-149 (VESPGRTHKQCRKKPVPPKDVCPLKPEDAGASSSPGRWSLGQTT) are disordered. The segment covering 111 to 121 (RTHKQCRKKPV) has biased composition (basic residues). Over residues 136-149 (ASSSPGRWSLGQTT) the composition is skewed to polar residues. Residues 164-184 (VLPLAVLPLLLVLLLILAVVL) form a helical membrane-spanning segment. The Cytoplasmic portion of the chain corresponds to 185-345 (LSLFKRKVRS…DALQVLSKLG (161 aa)).

Ubiquitously expressed with higher expression in lymph node. Highly expressed in T-cells and monocytes.

The protein localises to the cell membrane. Its function is as follows. Probable cell membrane receptor for the IGF-like family protein IGFL. This chain is IGF-like family receptor 1 (Igflr1), found in Mus musculus (Mouse).